Here is a 697-residue protein sequence, read N- to C-terminus: Phosphate acetyltransferase (697 aa).

Residues 374–697 (LFLYNLVQAA…TVVITALQVK (324 aa)) are phosphate acetyltransferase.

This sequence in the N-terminal section; belongs to the CobB/CobQ family. In the C-terminal section; belongs to the phosphate acetyltransferase and butyryltransferase family.

Its subcellular location is the cytoplasm. It catalyses the reaction acetyl-CoA + phosphate = acetyl phosphate + CoA. The protein operates within metabolic intermediate biosynthesis; acetyl-CoA biosynthesis; acetyl-CoA from acetate: step 2/2. Its function is as follows. Involved in acetate metabolism. The sequence is that of Phosphate acetyltransferase (pta) from Synechocystis sp. (strain ATCC 27184 / PCC 6803 / Kazusa).